A 600-amino-acid chain; its full sequence is MGTSEHVPLPTDEAKAKELEQSQHSEEPDRGQWTGKFDFLMSMVAYAVGLGNVWRFPYLCYKNGGGSFLVVYMIFFCLAAVPIFLMEVTVGQYLQKGAMEMWLMCPLFRGVGIGNVVIAFMCIAYFCVIVAWAMFYMISSIAWVFPWETCNNYWNDATCVTGKENFTELARIKALVASAGGHTQTSVEQFWEKRVLHDTGDISEFGGIQWELFFIMAAAWLIVYFALWKGITQARKFVYFCALFPYVLIFILLIRGLTLEGAGTGIYFYLKPNATRLLDTAVWKDAGTQVFYSYGVGFGALIALGSHNKFNHNCFKDAITMCFINGCTSITAGFAVFSILGYMSHVAQKDISEIVKPGVGLAFLAYPEVASNLPMKQVFAVLFFLMITILGLDSQVCMMEGLFTALEDAFPILRKYKKQSLGIFCLFFFCIGIPMVTHSGSHWLTLFDAYGASGYALLFVVFFEVVGLAYGFGAHNIRKALHEMIGVTLPKGIEYVWKFCAPATSLVLFVFCVVYYHPVKYPDGKDFPFWANAFGWFLSSCSMVVIPGYAIYYLFFTNKHLTLKERVRKGLNLDGSFESPAKKNLVNNAEELKFIESSSQ.

A disordered region spans residues 1–31 (MGTSEHVPLPTDEAKAKELEQSQHSEEPDRG). Topologically, residues 1-38 (MGTSEHVPLPTDEAKAKELEQSQHSEEPDRGQWTGKFD) are cytoplasmic. Residues 12–30 (DEAKAKELEQSQHSEEPDR) are compositionally biased toward basic and acidic residues. Transmembrane regions (helical) follow at residues 39 to 59 (FLMSMVAYAVGLGNVWRFPYL), 68 to 88 (FLVVYMIFFCLAAVPIFLMEV), and 116 to 136 (VVIAFMCIAYFCVIVAWAMFY). Residues 137-207 (MISSIAWVFP…DTGDISEFGG (71 aa)) are Extracellular-facing. A glycan (N-linked (GlcNAc...) asparagine) is linked at N165. 2 consecutive transmembrane segments (helical) span residues 208-228 (IQWELFFIMAAAWLIVYFALW) and 237-257 (FVYFCALFPYVLIFILLIRGL). A glycan (N-linked (GlcNAc...) asparagine) is linked at N273. 7 helical membrane passes run 286-306 (AGTQVFYSYGVGFGALIALGS), 321-341 (MCFINGCTSITAGFAVFSILG), 378-398 (VFAVLFFLMITILGLDSQVCM), 420-440 (SLGIFCLFFFCIGIPMVTHSG), 454-474 (GYALLFVVFFEVVGLAYGFGA), 499-519 (FCAPATSLVLFVFCVVYYHPV), and 536-556 (WFLSSCSMVVIPGYAIYYLFF). The Cytoplasmic segment spans residues 557–600 (TNKHLTLKERVRKGLNLDGSFESPAKKNLVNNAEELKFIESSSQ).

Belongs to the sodium:neurotransmitter symporter (SNF) family. Highly expressed in the head, the excretory canal, tail hypodermal cells, epidermis and vulval epithelial cells. Expressed in the excretory canal-associated neuron and in some non-amphidial sensory neurons in the head (at protein level).

It is found in the cell membrane. Betaine transporter dependent on Na(+) and Cl(-) ions that functions primarily in the epidermis to clear betaine from the extracellular space. Elicits current in response to betaine but not in response to GABA, L-carnitine, sarcosine, glycine or dimethylglycine. The sequence is that of Sodium- and chloride-dependent betaine transporter from Caenorhabditis elegans.